A 326-amino-acid polypeptide reads, in one-letter code: Undecaprenyl-diphosphatase (326 aa).

9 consecutive transmembrane segments (helical) span residues 11 to 31 (AFSL…IAVA), 42 to 62 (TGVI…LGFI), 90 to 110 (GVAF…WYFW), 138 to 158 (LGIG…KLLV), 165 to 185 (FFRS…LLAL), 212 to 232 (ALAL…GLFI), 242 to 262 (FSFL…LKGL), 272 to 292 (ILPL…AIAW), and 304 to 324 (IFVW…GMGF).

The protein belongs to the UppP family.

It localises to the cell inner membrane. The enzyme catalyses di-trans,octa-cis-undecaprenyl diphosphate + H2O = di-trans,octa-cis-undecaprenyl phosphate + phosphate + H(+). Functionally, catalyzes the dephosphorylation of undecaprenyl diphosphate (UPP). Confers resistance to bacitracin. The chain is Undecaprenyl-diphosphatase from Synechocystis sp. (strain ATCC 27184 / PCC 6803 / Kazusa).